Consider the following 361-residue polypeptide: Chorismate synthase (361 aa).

NADP(+) contacts are provided by Arg-48 and Arg-54. Residues Arg-125–Ser-127, Asn-238–Ala-239, Gly-278, Lys-293–Ser-297, and Arg-319 contribute to the FMN site.

It belongs to the chorismate synthase family. In terms of assembly, homotetramer. It depends on FMNH2 as a cofactor.

It carries out the reaction 5-O-(1-carboxyvinyl)-3-phosphoshikimate = chorismate + phosphate. It participates in metabolic intermediate biosynthesis; chorismate biosynthesis; chorismate from D-erythrose 4-phosphate and phosphoenolpyruvate: step 7/7. Catalyzes the anti-1,4-elimination of the C-3 phosphate and the C-6 proR hydrogen from 5-enolpyruvylshikimate-3-phosphate (EPSP) to yield chorismate, which is the branch point compound that serves as the starting substrate for the three terminal pathways of aromatic amino acid biosynthesis. This reaction introduces a second double bond into the aromatic ring system. This chain is Chorismate synthase, found in Citrobacter koseri (strain ATCC BAA-895 / CDC 4225-83 / SGSC4696).